We begin with the raw amino-acid sequence, 231 residues long: Thermonuclease (231 aa).

Residues 1–26 (MLVMTEYLLSAGICMAIVSILLIGMA) form the signal peptide. 2 consecutive propeptides follow at residues 27-63 (ISNV…SANA) and 64-82 (SQTD…TVYS). A compositionally biased stretch (polar residues) spans 61-73 (ANASQTDNGVNRS). The segment at 61-86 (ANASQTDNGVNRSGSEDPTVYSATST) is disordered. D103 lines the Ca(2+) pocket. R117 is a catalytic residue. 2 residues coordinate Ca(2+): D122 and T123. Catalysis depends on residues E125 and R169. The span at 203-219 (HEQHLRKSEAQAKKEKL) shows a compositional bias: basic and acidic residues. A disordered region spans residues 203–231 (HEQHLRKSEAQAKKEKLNIWSEDNADSGQ).

It belongs to the thermonuclease family. Ca(2+) serves as cofactor.

It localises to the secreted. The protein localises to the membrane. The enzyme catalyses Endonucleolytic cleavage to nucleoside 3'-phosphates and 3'-phosphooligonucleotide end-products.. Functionally, enzyme that catalyzes the hydrolysis of both DNA and RNA at the 5' position of the phosphodiester bond. The sequence is that of Thermonuclease from Staphylococcus aureus.